The primary structure comprises 505 residues: Ookinete surface protein PIMMS43 (505 aa).

The signal sequence occupies residues 1–24 (MQKRIYVSLFFLVFFLSKISVVLS). The tract at residues 188 to 221 (ERRKKKLDDEQKRQKDLEDTNRKENDEEQSYKKL) is disordered. The chain crosses the membrane as a helical span at residues 485–505 (SSIYSSIKYFFLLMLFVIYIL).

As to quaternary structure, monomer. May form multimers with an unknown protein(s).

The protein localises to the membrane. Functionally, involved in ookinete evasion of the mosquito complement-like response, oocyst maturation, sporozoite development and infectivity. The polypeptide is Ookinete surface protein PIMMS43 (Plasmodium falciparum (isolate 3D7)).